The primary structure comprises 139 residues: NADH-quinone oxidoreductase subunit A (139 aa).

The next 3 helical transmembrane spans lie at 11–31, 70–90, and 97–117; these read LWPL…MLAL, LIAI…AWAI, and WPGY…LVYL.

This sequence belongs to the complex I subunit 3 family. NDH-1 is composed of 14 different subunits. Subunits NuoA, H, J, K, L, M, N constitute the membrane sector of the complex.

It localises to the cell inner membrane. The catalysed reaction is a quinone + NADH + 5 H(+)(in) = a quinol + NAD(+) + 4 H(+)(out). Its function is as follows. NDH-1 shuttles electrons from NADH, via FMN and iron-sulfur (Fe-S) centers, to quinones in the respiratory chain. The immediate electron acceptor for the enzyme in this species is believed to be ubiquinone. Couples the redox reaction to proton translocation (for every two electrons transferred, four hydrogen ions are translocated across the cytoplasmic membrane), and thus conserves the redox energy in a proton gradient. The chain is NADH-quinone oxidoreductase subunit A from Methylococcus capsulatus (strain ATCC 33009 / NCIMB 11132 / Bath).